The chain runs to 603 residues: uncharacterized protein (603 aa).

Residues 4–79 (YRIRVTTVDQ…VTFHLVIAVF (76 aa)) form the Ubiquitin-like domain. Disordered stretches follow at residues 85 to 121 (TLPSATSSSVPQSRTSELSSTNSIPTPRITSLNPEEL), 159 to 178 (SLPTHEQSSPVAESLDNSVS), and 206 to 348 (AQES…NQPF). 2 stretches are compositionally biased toward polar residues: residues 94–117 (VPQSRTSELSSTNSIPTPRITSLN) and 162–178 (THEQSSPVAESLDNSVS). The span at 219-231 (SSSSAPLASDQSP) shows a compositional bias: low complexity. Residues 246–264 (LGSNSGLNPRSPNSFSSPL) are compositionally biased toward polar residues. Low complexity predominate over residues 280-289 (SLSPLSNSSS). Positions 290–314 (INQVHQNETHGSTISVPNPNLSQMG) are enriched in polar residues. Low complexity predominate over residues 315–329 (PSHSSSVPSNLSPNP). Residues 330–348 (AQNENPSTTSIPSINNQPF) show a composition bias toward polar residues. Residues 496–516 (ILLTSIMSVVFLLQTGALAPF) form a helical membrane-spanning segment. The disordered stretch occupies residues 544 to 578 (TAQRVVEIPNETQTEDEQDGTNTPDNRADAEEREL). The residue at position 566 (Thr-566) is a Phosphothreonine. Over residues 569–578 (NRADAEEREL) the composition is skewed to basic and acidic residues.

It is found in the endoplasmic reticulum membrane. This is an uncharacterized protein from Schizosaccharomyces pombe (strain 972 / ATCC 24843) (Fission yeast).